A 352-amino-acid polypeptide reads, in one-letter code: Zona pellucida-binding protein 2 (352 aa).

The N-terminal stretch at 1-28 is a signal peptide; the sequence is MAGGGGRPCSPQRALLGMVAIMAVVAEA. Residues Asn-110 and Asn-309 are each glycosylated (N-linked (GlcNAc...) asparagine).

The protein belongs to the zona pellucida-binding protein Sp38 family.

It localises to the secreted. The protein localises to the cytoplasmic vesicle. The protein resides in the secretory vesicle. It is found in the acrosome. May be implicated in the gamete interaction during fertilization. The sequence is that of Zona pellucida-binding protein 2 (ZPBP2) from Gallus gallus (Chicken).